A 449-amino-acid polypeptide reads, in one-letter code: UDP-N-acetylmuramoylalanine--D-glutamate ligase (449 aa).

Residue 118–124 coordinates ATP; that stretch reads GSNGKTT.

It belongs to the MurCDEF family.

Its subcellular location is the cytoplasm. It carries out the reaction UDP-N-acetyl-alpha-D-muramoyl-L-alanine + D-glutamate + ATP = UDP-N-acetyl-alpha-D-muramoyl-L-alanyl-D-glutamate + ADP + phosphate + H(+). It functions in the pathway cell wall biogenesis; peptidoglycan biosynthesis. Cell wall formation. Catalyzes the addition of glutamate to the nucleotide precursor UDP-N-acetylmuramoyl-L-alanine (UMA). In Leuconostoc citreum (strain KM20), this protein is UDP-N-acetylmuramoylalanine--D-glutamate ligase.